A 312-amino-acid polypeptide reads, in one-letter code: Putative S-adenosyl-L-methionine-dependent methyltransferase BCG_1768c (312 aa).

S-adenosyl-L-methionine contacts are provided by residues aspartate 130 and 159-160 (DL).

It belongs to the UPF0677 family.

Exhibits S-adenosyl-L-methionine-dependent methyltransferase activity. The sequence is that of Putative S-adenosyl-L-methionine-dependent methyltransferase BCG_1768c from Mycobacterium bovis (strain BCG / Pasteur 1173P2).